The sequence spans 241 residues: Ribosomal RNA small subunit methyltransferase G (241 aa).

S-adenosyl-L-methionine contacts are provided by residues G79, F84, 130–131 (AE), and R150.

The protein belongs to the methyltransferase superfamily. RNA methyltransferase RsmG family.

Its subcellular location is the cytoplasm. Functionally, specifically methylates the N7 position of a guanine in 16S rRNA. This chain is Ribosomal RNA small subunit methyltransferase G, found in Ligilactobacillus salivarius (strain UCC118) (Lactobacillus salivarius).